The chain runs to 303 residues: uncharacterized protein (303 aa).

2 disordered regions span residues Met1 to Ser89 and Ser132 to Arg159. The segment covering Arg61–Ser89 has biased composition (polar residues). Helical transmembrane passes span Leu205–Leu225 and Val264–Val284.

To M.tuberculosis Rv0007.

It localises to the cell membrane. This is an uncharacterized protein from Mycobacterium leprae (strain TN).